Consider the following 500-residue polypeptide: Maturase K (500 aa).

This sequence belongs to the intron maturase 2 family. MatK subfamily.

Its subcellular location is the plastid. It is found in the chloroplast. Usually encoded in the trnK tRNA gene intron. Probably assists in splicing its own and other chloroplast group II introns. This is Maturase K from Prunus laurocerasus (Cherry laurel).